A 513-amino-acid chain; its full sequence is Probable cytosol aminopeptidase (513 aa).

Mn(2+) is bound by residues Lys-277 and Asp-282. Lys-289 is an active-site residue. The Mn(2+) site is built by Asp-300, Asp-359, and Glu-361. The active site involves Arg-363.

The protein belongs to the peptidase M17 family. Requires Mn(2+) as cofactor.

Its subcellular location is the cytoplasm. The enzyme catalyses Release of an N-terminal amino acid, Xaa-|-Yaa-, in which Xaa is preferably Leu, but may be other amino acids including Pro although not Arg or Lys, and Yaa may be Pro. Amino acid amides and methyl esters are also readily hydrolyzed, but rates on arylamides are exceedingly low.. It catalyses the reaction Release of an N-terminal amino acid, preferentially leucine, but not glutamic or aspartic acids.. Its function is as follows. Presumably involved in the processing and regular turnover of intracellular proteins. Catalyzes the removal of unsubstituted N-terminal amino acids from various peptides. This chain is Probable cytosol aminopeptidase, found in Mycobacterium sp. (strain JLS).